Here is a 349-residue protein sequence, read N- to C-terminus: tRNA pseudouridine synthase D (349 aa).

Phenylalanine 27 is a substrate binding site. The Nucleophile role is filled by aspartate 80. A substrate-binding site is contributed by asparagine 129. One can recognise a TRUD domain in the interval 155 to 303 (GVPNYFGAQR…VEAARRAMLL (149 aa)). Phenylalanine 329 contributes to the substrate binding site.

The protein belongs to the pseudouridine synthase TruD family.

The catalysed reaction is uridine(13) in tRNA = pseudouridine(13) in tRNA. In terms of biological role, responsible for synthesis of pseudouridine from uracil-13 in transfer RNAs. The polypeptide is tRNA pseudouridine synthase D (Escherichia coli O17:K52:H18 (strain UMN026 / ExPEC)).